The sequence spans 88 residues: Electron transfer flavoprotein regulatory factor 1 (88 aa).

It belongs to the complex I LYR family. Homotetramer. Interacts with NDUFAB1. Interacts with ETFA. Interacts with ETFB.

It is found in the mitochondrion. Acts as a regulator of the electron transfer flavoprotein by promoting the removal of flavin from the ETF holoenzyme (composed of ETFA and ETFB). The sequence is that of Electron transfer flavoprotein regulatory factor 1 from Bos taurus (Bovine).